A 768-amino-acid chain; its full sequence is Actin filament-associated protein 1-like 1 (768 aa).

The segment at 82–145 (DLRDMPEDDG…GKSPEYISSH (64 aa)) is disordered. A phosphoserine mark is found at S94, S98, S104, and S153. The disordered stretch occupies residues 173 to 211 (GELKSSYNDSDAMSSSYESYDEEEEEGKSPQPRHQWPSE). A compositionally biased stretch (low complexity) spans 177–190 (SSYNDSDAMSSSYE). The PH 1 domain occupies 220–316 (ECRICAFLLR…WLKVIREVSK (97 aa)). Residues S329 and S343 each carry the phosphoserine modification. In terms of domain architecture, PH 2 spans 418–512 (EVPCCGYLNV…WLGLLLVEMG (95 aa)). Y557 bears the Phosphotyrosine mark. Residues 566–604 (QDEEPERPTGAQVKRHASSCSEKSHRVDPQVKVKRHASS) form a disordered region. Basic and acidic residues predominate over residues 587–596 (EKSHRVDPQV). The stretch at 611–700 (GKNRAEEDAR…VAVKERLQQS (90 aa)) forms a coiled coil. The interval 705-768 (PALGLSVSSK…KAKEWEMKKT (64 aa)) is disordered. A compositionally biased stretch (polar residues) spans 710-729 (SVSSKPKSGETANKPQNSVP). At S747 the chain carries Phosphoserine. Basic and acidic residues predominate over residues 759-768 (KAKEWEMKKT).

Interacts with CTTN. Expressed in breast, colon and brain. In all 3 tissues, expressed in the microvasculature (at protein level). In addition, in the breast, found in the contractile myoepithelial cell layer which surrounds the breast ducts (at protein level). In the colon, expressed in the mucous membrane and colonic crypts and in the smooth muscle cell layer which provide movement of the colon (at protein level). In the cerebellum, localized around the Purkinje neurons and the granule cells of the granular layer, but not inside cell bodies (at protein level). Outside of the cerebellar cortex, expressed in glial cells (at protein level). Highly expressed away from the cell bodies within the dentate nucleus (at protein level).

It is found in the cytoplasm. It localises to the cell projection. The protein localises to the podosome. The protein resides in the invadopodium. Its subcellular location is the cytoskeleton. It is found in the stress fiber. Functionally, may be involved in podosome and invadosome formation. The sequence is that of Actin filament-associated protein 1-like 1 (AFAP1L1) from Homo sapiens (Human).